Here is a 451-residue protein sequence, read N- to C-terminus: Tubulin beta-1 chain (451 aa).

The short motif at 1–4 is the MREI motif element; it reads MREI. GTP contacts are provided by Q11, E69, S138, G142, T143, and G144. Mg(2+) is bound at residue E69. Phosphoserine; by CDK1 is present on S172. 2 residues coordinate GTP: N204 and N226. The tract at residues 432–451 is disordered; sequence LEEDEEVTEEAEMEPEDKGH. Residues 433 to 451 are compositionally biased toward acidic residues; the sequence is EEDEEVTEEAEMEPEDKGH. E440 is subject to 5-glutamyl polyglutamate.

The protein belongs to the tubulin family. In terms of assembly, dimer of alpha and beta chains. A typical microtubule is a hollow water-filled tube with an outer diameter of 25 nm and an inner diameter of 15 nM. Alpha-beta heterodimers associate head-to-tail to form protofilaments running lengthwise along the microtubule wall with the beta-tubulin subunit facing the microtubule plus end conferring a structural polarity. Microtubules usually have 13 protofilaments but different protofilament numbers can be found in some organisms and specialized cells. Interacts with RANBP10. Mg(2+) serves as cofactor. Some glutamate residues at the C-terminus are polyglutamylated, resulting in polyglutamate chains on the gamma-carboxyl group. Polyglutamylation plays a key role in microtubule severing by spastin (SPAST). SPAST preferentially recognizes and acts on microtubules decorated with short polyglutamate tails: severing activity by SPAST increases as the number of glutamates per tubulin rises from one to eight, but decreases beyond this glutamylation threshold. Glutamylation is also involved in cilia motility. Post-translationally, some glutamate residues at the C-terminus are monoglycylated but not polyglycylated due to the absence of functional TTLL10 in human. Monoglycylation is mainly limited to tubulin incorporated into cilia and flagella axonemes, which is required for their stability and maintenance. Flagella glycylation controls sperm motility. Both polyglutamylation and monoglycylation can coexist on the same protein on adjacent residues, and lowering glycylation levels increases polyglutamylation, and reciprocally. In terms of processing, phosphorylated on Ser-172 by CDK1 during the cell cycle, from metaphase to telophase, but not in interphase. This phosphorylation inhibits tubulin incorporation into microtubules. Hematopoietic cell-specific. Major isotype in leukocytes, where it represents 50% of all beta-tubulins.

The protein resides in the cytoplasm. The protein localises to the cytoskeleton. Tubulin is the major constituent of microtubules, a cylinder consisting of laterally associated linear protofilaments composed of alpha- and beta-tubulin heterodimers. Microtubules grow by the addition of GTP-tubulin dimers to the microtubule end, where a stabilizing cap forms. Below the cap, tubulin dimers are in GDP-bound state, owing to GTPase activity of alpha-tubulin. The protein is Tubulin beta-1 chain (TUBB1) of Homo sapiens (Human).